A 199-amino-acid chain; its full sequence is NAD(P)H dehydrogenase (quinone) (199 aa).

A Flavodoxin-like domain is found at 4–190 (VLVLYYSAYG…AGARYQGQVI (187 aa)). FMN-binding positions include 10-15 (SAYGHI) and 78-80 (TRF). Position 12 (tyrosine 12) interacts with NAD(+). Tryptophan 98 lines the substrate pocket. FMN-binding positions include 113–119 (STATQHG) and histidine 134.

This sequence belongs to the WrbA family. The cofactor is FMN.

It carries out the reaction a quinone + NADH + H(+) = a quinol + NAD(+). The enzyme catalyses a quinone + NADPH + H(+) = a quinol + NADP(+). This Rhodopseudomonas palustris (strain BisA53) protein is NAD(P)H dehydrogenase (quinone).